The chain runs to 203 residues: uncharacterized protein (203 aa).

An N-terminal signal peptide occupies residues 1–20 (MDELILPILILLFLVFVAYF).

This is an uncharacterized protein from Pasteurella multocida (strain Pm70).